Reading from the N-terminus, the 236-residue chain is Small ribosomal subunit protein uS2c (236 aa).

It belongs to the universal ribosomal protein uS2 family.

The protein localises to the plastid. It localises to the chloroplast. The sequence is that of Small ribosomal subunit protein uS2c (rps2) from Platanus occidentalis (Sycamore).